The following is a 336-amino-acid chain: Probable long-chain-alcohol O-fatty-acyltransferase 8 (336 aa).

8 consecutive transmembrane segments (helical) span residues 7–27 (SFVK…YIPS), 38–58 (SVLP…FTIF), 59–79 (SSTT…LFAF), 82–102 (GPLL…CLPI), 117–135 (WVFF…VHNY), 152–172 (LYLV…IILG), 228–248 (MGCW…YFYI), and 284–304 (PMLS…FLFF).

It belongs to the wax synthase family.

The protein resides in the membrane. It catalyses the reaction a long chain fatty alcohol + a fatty acyl-CoA = a wax ester + CoA. Its function is as follows. Catalyzes the final step in the synthesis of long-chain linear esters (waxes). This chain is Probable long-chain-alcohol O-fatty-acyltransferase 8, found in Arabidopsis thaliana (Mouse-ear cress).